We begin with the raw amino-acid sequence, 229 residues long: DNA repair protein RecO (229 aa).

Belongs to the RecO family.

Its function is as follows. Involved in DNA repair and RecF pathway recombination. The chain is DNA repair protein RecO from Legionella pneumophila subsp. pneumophila (strain Philadelphia 1 / ATCC 33152 / DSM 7513).